Consider the following 226-residue polypeptide: Lipoprotein-releasing system ATP-binding protein LolD (226 aa).

The region spanning 5-226 is the ABC transporter domain; that stretch reads LKATNINKIY…LLRNGHWENY (222 aa). Position 41 to 48 (41 to 48) interacts with ATP; it reads GTSGSGKS.

The protein belongs to the ABC transporter superfamily. Lipoprotein translocase (TC 3.A.1.125) family. In terms of assembly, the complex is composed of two ATP-binding proteins (LolD) and two transmembrane proteins (LolC and LolE).

It localises to the cell inner membrane. Functionally, part of the ABC transporter complex LolCDE involved in the translocation of mature outer membrane-directed lipoproteins, from the inner membrane to the periplasmic chaperone, LolA. Responsible for the formation of the LolA-lipoprotein complex in an ATP-dependent manner. In Psychrobacter arcticus (strain DSM 17307 / VKM B-2377 / 273-4), this protein is Lipoprotein-releasing system ATP-binding protein LolD.